The following is a 107-amino-acid chain: uncharacterized protein (107 aa).

A compositionally biased stretch (polar residues) spans 80–98 (SIDNLKPTSHQNGTTNDTA). The interval 80 to 107 (SIDNLKPTSHQNGTTNDTATMDHLEKNE) is disordered.

This is an uncharacterized protein from Human spumaretrovirus (SFVcpz(hu)).